We begin with the raw amino-acid sequence, 285 residues long: uncharacterized protein (285 aa).

Helical transmembrane passes span F7 to Q29, L49 to F71, I95 to L117, F137 to A156, K232 to L254, and G259 to V281.

It localises to the cell membrane. This is an uncharacterized protein from Aquifex aeolicus (strain VF5).